The primary structure comprises 395 residues: Cytoplasmic tRNA 2-thiolation protein 1 (395 aa).

Residues 297–309 (TVAYKNKNKNKKK) show a composition bias toward basic residues. A disordered region spans residues 297-335 (TVAYKNKNKNKKKSNSEQEEQEKQEQEVNPDGSISLNRN).

This sequence belongs to the TtcA family. CTU1/NCS6/ATPBD3 subfamily.

It localises to the cytoplasm. It participates in tRNA modification; 5-methoxycarbonylmethyl-2-thiouridine-tRNA biosynthesis. Its function is as follows. Plays a central role in 2-thiolation of mcm(5)S(2)U at tRNA wobble positions of tRNA(Lys), tRNA(Glu) and tRNA(Gln). Directly binds tRNAs and probably acts by catalyzing adenylation of tRNAs, an intermediate required for 2-thiolation. It is unclear whether it acts as a sulfurtransferase that transfers sulfur from thiocarboxylated URM1 onto the uridine of tRNAs at wobble position. Prior mcm(5) tRNA modification by the elongator complex is required for 2-thiolation. May also be involved in protein urmylation. The polypeptide is Cytoplasmic tRNA 2-thiolation protein 1 (Candida albicans (strain SC5314 / ATCC MYA-2876) (Yeast)).